A 257-amino-acid chain; its full sequence is MPARCVAAHCGNTTKSGKSLFRFPKDRAVRLLWDRFVRGCRADWYGGNDRSVICSDHFAPACFDVSSVIQKNLRFSQRLRLVAGAVPTLHRVPAPAPKRGEEGDQAGRLDTRGELQAARHSEAAPGPVSCTRPRAGKQAAASQITCENELVQTQPHADNPSNTVTSVPTHCEEGPVHKSTQISLKRPRHRSVGIQAKVKAFGKRLCNATTQTEELWSRTSSLFDIYSSDSETDTDWDIKSEQSDLSYMAVQVKEETC.

Residues 1-90 form a THAP-type zinc finger; the sequence is MPARCVAAHC…LVAGAVPTLH (90 aa). Positions 154 to 168 are enriched in polar residues; the sequence is QPHADNPSNTVTSVP. A disordered region spans residues 154–178; it reads QPHADNPSNTVTSVPTHCEEGPVHK.

This is THAP domain-containing protein 10 (THAP10) from Homo sapiens (Human).